The following is a 45-amino-acid chain: Mu-conotoxin-like Cal 12.1.2g (45 aa).

Intrachain disulfides connect Cys-3-Cys-16, Cys-11-Cys-28, Cys-18-Cys-33, and Cys-27-Cys-39. Pro-23 bears the 4-hydroxyproline mark. 6'-bromotryptophan is present on residues Trp-37 and Trp-38. Position 40 is a 4-hydroxyproline (Pro-40).

As to expression, expressed by the venom duct.

The protein localises to the secreted. Mu-conotoxins block voltage-gated sodium channels. This toxin reversibly blocks voltage-gated sodium channel in cephalopods, with no alteration in the voltage dependence of sodium conductance or on the kinetics of inactivation. This is Mu-conotoxin-like Cal 12.1.2g from Californiconus californicus (California cone).